A 588-amino-acid polypeptide reads, in one-letter code: Putative ABC transporter ATP-binding protein PAM_020 (588 aa).

2 ABC transporter domains span residues 6–247 (IIFK…GIQE) and 317–551 (LQLQ…TSLN). ATP contacts are provided by residues 40–47 (GKNGSGKS) and 351–358 (GKNGSGKS).

The protein belongs to the ABC transporter superfamily.

Its subcellular location is the cell membrane. Functionally, probably part of an ABC transporter complex. Responsible for energy coupling to the transport system. In Onion yellows phytoplasma (strain OY-M), this protein is Putative ABC transporter ATP-binding protein PAM_020.